The primary structure comprises 650 residues: DNA mismatch repair protein MutL (650 aa).

2 disordered regions span residues 358–392 and 408–448; these read EASQ…QPLV and QPRP…QSAA. Residues 367-384 show a composition bias toward pro residues; that stretch reads TPQPRPALTPGHPDPPPQ. The span at 430-444 shows a compositional bias: low complexity; sequence PYAPIAAAPVPASEP.

Belongs to the DNA mismatch repair MutL/HexB family.

In terms of biological role, this protein is involved in the repair of mismatches in DNA. It is required for dam-dependent methyl-directed DNA mismatch repair. May act as a 'molecular matchmaker', a protein that promotes the formation of a stable complex between two or more DNA-binding proteins in an ATP-dependent manner without itself being part of a final effector complex. The sequence is that of DNA mismatch repair protein MutL from Geobacter sp. (strain M21).